Consider the following 382-residue polypeptide: Chaperone protein DnaJ (382 aa).

Residues 5–69 (DYYEILGVSK…EKRARYDRFG (65 aa)) form the J domain. The CR-type zinc finger occupies 137 to 219 (GKETEIEIPR…CGGTGRVKRR (83 aa)). Residues Cys150, Cys153, Cys167, Cys170, Cys193, Cys196, Cys207, and Cys210 each contribute to the Zn(2+) site. CXXCXGXG motif repeat units lie at residues 150–157 (CDTCQGSG), 167–174 (CPHCHGSG), 193–200 (CPVCGGTG), and 207–214 (CPTCGGTG). A disordered region spans residues 154 to 175 (QGSGAKPGTSPTSCPHCHGSGQ).

The protein belongs to the DnaJ family. As to quaternary structure, homodimer. Zn(2+) serves as cofactor.

It is found in the cytoplasm. Functionally, participates actively in the response to hyperosmotic and heat shock by preventing the aggregation of stress-denatured proteins and by disaggregating proteins, also in an autonomous, DnaK-independent fashion. Unfolded proteins bind initially to DnaJ; upon interaction with the DnaJ-bound protein, DnaK hydrolyzes its bound ATP, resulting in the formation of a stable complex. GrpE releases ADP from DnaK; ATP binding to DnaK triggers the release of the substrate protein, thus completing the reaction cycle. Several rounds of ATP-dependent interactions between DnaJ, DnaK and GrpE are required for fully efficient folding. Also involved, together with DnaK and GrpE, in the DNA replication of plasmids through activation of initiation proteins. This is Chaperone protein DnaJ from Geobacillus kaustophilus (strain HTA426).